Here is a 72-residue protein sequence, read N- to C-terminus: Osmotically-inducible lipoprotein B (72 aa).

The N-terminal stretch at methionine 1–alanine 23 is a signal peptide. Cysteine 24 carries the N-palmitoyl cysteine lipid modification. A lipid anchor (S-diacylglycerol cysteine) is attached at cysteine 24.

It localises to the cell membrane. Its function is as follows. Provides resistance to osmotic stress. May be important for stationary-phase survival. This is Osmotically-inducible lipoprotein B (osmB) from Escherichia coli O157:H7.